An 82-amino-acid chain; its full sequence is Penaeidin-3i (82 aa).

Positions 1–19 (MRLVVCLVFLASFALVCQG) are cleaved as a signal peptide. Gln-20 bears the Pyrrolidone carboxylic acid mark. Disulfide bonds link Cys-55/Cys-73 and Cys-67/Cys-74. Position 81 is a serine amide (Ser-81).

This sequence belongs to the penaeidin family.

The protein localises to the cytoplasmic granule. In terms of biological role, antibacterial and antifungal activity. Presents chitin-binding activity. The sequence is that of Penaeidin-3i from Penaeus vannamei (Whiteleg shrimp).